A 1577-amino-acid polypeptide reads, in one-letter code: Dynamin-binding protein (1577 aa).

N-acetylmethionine is present on methionine 1. SH3 domains are found at residues 2 to 61 (EPGS…IVTI), 66 to 126 (EGER…ELCL), and 145 to 204 (YSMG…LLGP). Residues 209 to 242 (DESVNAGSGDDSTLNDEVDVSPEEVESEGDEDDQ) form a disordered region. A compositionally biased stretch (acidic residues) spans 221 to 242 (TLNDEVDVSPEEVESEGDEDDQ). Residues 243-302 (QAGTYGIALYRFQALESNELDFEVGDKIRILGTLEDGWLEGRLKGKTGIFPHRFVKLCPS) enclose the SH3 4 domain. 2 disordered regions span residues 307 to 361 (ETMA…EEPL) and 375 to 437 (GQDE…SRQC). Residues 400–410 (PDLSQEVNGIS) are compositionally biased toward polar residues. Serine 494 carries the phosphoserine modification. Disordered stretches follow at residues 519–547 (PERP…DNLD) and 590–681 (RGSS…SEYT). Positions 617-626 (TPTSTSPHLL) are enriched in low complexity. Pro residues predominate over residues 632-651 (KPGPPLVVRPSRPAPLPPPT). The segment covering 652–662 (QQRLNTASPKP) has biased composition (polar residues). The span at 672–681 (APEKEGSEYT) shows a compositional bias: basic and acidic residues. Serine 684 is subject to Phosphoserine. Residues 705–755 (LDMHTRAQEELNLLLEEKQDESLRAETLETLKSYESTIQSLNLELQQLREM) adopt a coiled-coil conformation. One can recognise a DH domain in the interval 784 to 967 (KRAKVVAELL…KEINANINEY (184 aa)). Residues 1008–1217 (LKHLTGFAPQ…LKASDREGNL (210 aa)) enclose the BAR domain. The SH3 5 domain maps to 1285-1348 (PPEKLFHVQR…YSSFLKPYNP (64 aa)). A compositionally biased stretch (low complexity) spans 1353–1375 (SDSSVVSHSSTESEHSGSSPSFH). Disordered stretches follow at residues 1353 to 1381 (SDSS…NSSS) and 1415 to 1510 (ETLG…LGSS). 2 stretches are compositionally biased toward polar residues: residues 1418 to 1428 (GVSSNTGNPET) and 1484 to 1497 (DQGS…SRAC). Residues 1513 to 1576 (EGNQVYFAIY…PSNYIRKTEY (64 aa)) enclose the SH3 6 domain.

Binds DNM1 via its N-terminal SH3 domains. The C-terminal SH3 domain binds a complex containing actin, tubulin, Hsp70 and actin-regulatory proteins, such as ENAH, EVL, WIRE, CR16, WAVE1 and NAP1L1. Interacts with FASLG. Interacts (via SH3 domain 6) with WASL. Interacts (via SH3 domain 6) interacts with ENAH. Interacts (via C-terminal domain) with TJP1; required for the apical cell-cell junction localization of DNMBP. In terms of tissue distribution, widely expressed.

It localises to the cytoplasm. It is found in the golgi apparatus. The protein resides in the golgi stack. The protein localises to the cytoskeleton. Its subcellular location is the synapse. It localises to the cell junction. Its function is as follows. Plays a critical role as a guanine nucleotide exchange factor (GEF) for CDC42 in several intracellular processes associated with the actin and microtubule cytoskeleton. Regulates the structure of apical junctions in epithelial cells. Participates in the normal lumenogenesis of epithelial cell cysts by regulating spindle orientation. Plays a role in ciliogenesis. May play a role in membrane trafficking between the cell surface and the Golgi. The chain is Dynamin-binding protein from Rattus norvegicus (Rat).